The following is a 417-amino-acid chain: Laccase-like protein claX (417 aa).

The protein belongs to the multicopper oxidase family.

Its function is as follows. Laccase-like protein; part of the gene cluster that mediates the biosynthesis of clavilactone A, a meroterpenoid that features a unique benzo-fused ten-membered carbocyclic ring unit with an alpha,beta-epoxy-gamma-lactone moiety, forming an intriguing 10/5/3 tricyclic nested skeleton. ClaR, ClaS and ClaT are sufficient to produce clavilactone A and the function of claX, if any, has still to be identified. The biosynthesis begins with the prenyltransferase claS that transfers geranyl pyrophosphate (GPP) to hydroquinone to produces geranylhydroquinon. The cytochrome P450 monooxygenase claR then catalyzes the diradical coupling reaction between the intramolecular hydroquinone and allyl moieties to form the benzo-fused ten-membered carbocyclic ring unit of wigantol. Finally the cytochrome P450 monooxygenase claT exquisitely and stereoselectively assembles the alpha,beta-epoxy-gamma-lactone moiety, producing clavilactone A via arnebinol A. In Ampulloclitocybe clavipes (Club foot), this protein is Laccase-like protein claX.